The following is a 119-amino-acid chain: Holo-[acyl-carrier-protein] synthase (119 aa).

The Mg(2+) site is built by Asp-8 and Glu-58.

Belongs to the P-Pant transferase superfamily. AcpS family. Mg(2+) serves as cofactor.

It localises to the cytoplasm. It carries out the reaction apo-[ACP] + CoA = holo-[ACP] + adenosine 3',5'-bisphosphate + H(+). Its function is as follows. Transfers the 4'-phosphopantetheine moiety from coenzyme A to a Ser of acyl-carrier-protein. In Bacillus thuringiensis subsp. konkukian (strain 97-27), this protein is Holo-[acyl-carrier-protein] synthase.